We begin with the raw amino-acid sequence, 268 residues long: MNDPNFLHAIILGIVEGVSEFLPISSTGHLIIVGELLGFSSVPGKVFEVVIQLGAILAICVLYSGRLTRVLRDAPRDAGARNFIGAIFVALIPAGLLGVLYHDFILEVLFTPYVVCAALITGGIAIVVVERLHLEPRITSVEAFSMRTALKIGLFQCIALVPGVSRSGATILGALLVGVERKTAAEFSFFLAIPVMLGASVVSLRDTWQLISMDDLHLIAAGFIAAFISALLVVKWLVSFVSSHGFTVFGWYRILFGSLLLIYFSLSS.

A run of 7 helical transmembrane segments spans residues 42–62 (VPGKVFEVVIQLGAILAICVL), 86–106 (AIFVALIPAGLLGVLYHDFIL), 108–128 (VLFTPYVVCAALITGGIAIVV), 158–178 (IALVPGVSRSGATILGALLVG), 184–204 (AAEFSFFLAIPVMLGASVVSL), 218–238 (LIAAGFIAAFISALLVVKWLV), and 246–266 (FTVFGWYRILFGSLLLIYFSL).

The protein belongs to the UppP family.

The protein resides in the cell inner membrane. It catalyses the reaction di-trans,octa-cis-undecaprenyl diphosphate + H2O = di-trans,octa-cis-undecaprenyl phosphate + phosphate + H(+). Catalyzes the dephosphorylation of undecaprenyl diphosphate (UPP). Confers resistance to bacitracin. This chain is Undecaprenyl-diphosphatase, found in Parvibaculum lavamentivorans (strain DS-1 / DSM 13023 / NCIMB 13966).